The chain runs to 404 residues: Deoxyguanosinetriphosphate triphosphohydrolase-like protein (404 aa).

The disordered stretch occupies residues 1-33 (MSVGMAAPRAAYGCDPDRSRGRQFAEPPSNNRS). An HD domain is found at 69 to 217 (RLTHSLEVAQ…AAIADDIAYD (149 aa)).

It belongs to the dGTPase family. Type 2 subfamily.

The protein is Deoxyguanosinetriphosphate triphosphohydrolase-like protein of Rhodopseudomonas palustris (strain BisB5).